The following is a 346-amino-acid chain: N-acetyl-gamma-glutamyl-phosphate reductase (346 aa).

Cys149 is an active-site residue.

This sequence belongs to the NAGSA dehydrogenase family. Type 1 subfamily.

The protein resides in the cytoplasm. It catalyses the reaction N-acetyl-L-glutamate 5-semialdehyde + phosphate + NADP(+) = N-acetyl-L-glutamyl 5-phosphate + NADPH + H(+). It functions in the pathway amino-acid biosynthesis; L-arginine biosynthesis; N(2)-acetyl-L-ornithine from L-glutamate: step 3/4. Catalyzes the NADPH-dependent reduction of N-acetyl-5-glutamyl phosphate to yield N-acetyl-L-glutamate 5-semialdehyde. The sequence is that of N-acetyl-gamma-glutamyl-phosphate reductase from Desulfotalea psychrophila (strain LSv54 / DSM 12343).